We begin with the raw amino-acid sequence, 486 residues long: Membrane-bound lytic murein transglycosylase F (486 aa).

A signal peptide spans 1–29 (MFSPTALRPRYAKWLIATGLFLMLSGCVD). Residues 30–267 (KPNTLERVKE…RLKDRYYGHV (238 aa)) form a non-LT domain region. The LT domain stretch occupies residues 268-486 (DVLGYMGATT…SKPAQEPAPL (219 aa)). Glu314 is a catalytic residue.

This sequence in the N-terminal section; belongs to the bacterial solute-binding protein 3 family. It in the C-terminal section; belongs to the transglycosylase Slt family.

The protein localises to the cell outer membrane. The catalysed reaction is Exolytic cleavage of the (1-&gt;4)-beta-glycosidic linkage between N-acetylmuramic acid (MurNAc) and N-acetylglucosamine (GlcNAc) residues in peptidoglycan, from either the reducing or the non-reducing ends of the peptidoglycan chains, with concomitant formation of a 1,6-anhydrobond in the MurNAc residue.. In terms of biological role, murein-degrading enzyme that degrades murein glycan strands and insoluble, high-molecular weight murein sacculi, with the concomitant formation of a 1,6-anhydromuramoyl product. Lytic transglycosylases (LTs) play an integral role in the metabolism of the peptidoglycan (PG) sacculus. Their lytic action creates space within the PG sacculus to allow for its expansion as well as for the insertion of various structures such as secretion systems and flagella. The protein is Membrane-bound lytic murein transglycosylase F of Pseudomonas fluorescens (strain Pf0-1).